The sequence spans 87 residues: Kappa 1b-bungarotoxin (87 aa).

The signal sequence occupies residues 1 to 21; it reads MKTLLLTLVVVTIVCLDLGYT. Intrachain disulfides connect Cys-24-Cys-42, Cys-35-Cys-63, Cys-48-Cys-52, Cys-67-Cys-79, and Cys-80-Cys-85.

This sequence belongs to the three-finger toxin family. Long-chain subfamily. Kappa-neurotoxin sub-subfamily. As to quaternary structure, homo- and heterodimer; non-covalently linked. Expressed by the venom gland.

The protein resides in the secreted. Functionally, postsynaptic neurotoxin that binds and inhibits neuronal nicotinic acetylcholine receptors (nAChR) with high affinity (IC(50)&lt;100 nM). Is a selective, and slowly reversible antagonist of alpha-3/CHRNA3-containing and some alpha-4/CHRNA4-containing AChRs. The chain is Kappa 1b-bungarotoxin from Bungarus candidus (Malayan krait).